Reading from the N-terminus, the 71-residue chain is MLCHARLEVESKDPEAVVKALKPDDPEWCSCWADNRIVIEVRVEKIGTLLSALDDYLMNIKMCEGVLEVLG.

This is an uncharacterized protein from Archaeoglobus fulgidus (strain ATCC 49558 / DSM 4304 / JCM 9628 / NBRC 100126 / VC-16).